The sequence spans 158 residues: Transcription elongation factor GreA (158 aa).

Residues 4–75 (EKTYPMTQEG…TQLENMIRNA (72 aa)) are a coiled coil.

Belongs to the GreA/GreB family.

Functionally, necessary for efficient RNA polymerase transcription elongation past template-encoded arresting sites. The arresting sites in DNA have the property of trapping a certain fraction of elongating RNA polymerases that pass through, resulting in locked ternary complexes. Cleavage of the nascent transcript by cleavage factors such as GreA or GreB allows the resumption of elongation from the new 3'terminus. GreA releases sequences of 2 to 3 nucleotides. The polypeptide is Transcription elongation factor GreA (Bacillus cereus (strain ATCC 10987 / NRS 248)).